The primary structure comprises 122 residues: MIQTESYLDVADNSGARRVMCIKVLGGSHRRYAAVGDIIKVTVKEAIPRGKVKKGQVLKAVVVRTKKGVRRQDGSLIKFDDNAAVLLNNQDAPIGTRIFGPVTRELRGEKFMKIISLAPEVL.

The protein belongs to the universal ribosomal protein uL14 family. Part of the 50S ribosomal subunit. Forms a cluster with proteins L3 and L19. In the 70S ribosome, L14 and L19 interact and together make contacts with the 16S rRNA in bridges B5 and B8.

Binds to 23S rRNA. Forms part of two intersubunit bridges in the 70S ribosome. This chain is Large ribosomal subunit protein uL14, found in Cellvibrio japonicus (strain Ueda107) (Pseudomonas fluorescens subsp. cellulosa).